The primary structure comprises 185 residues: Ribose 1,5-bisphosphate phosphokinase PhnN (185 aa).

ATP is bound at residue 10-17 (GPSGSGKD).

This sequence belongs to the ribose 1,5-bisphosphokinase family.

The catalysed reaction is alpha-D-ribose 1,5-bisphosphate + ATP = 5-phospho-alpha-D-ribose 1-diphosphate + ADP. It functions in the pathway metabolic intermediate biosynthesis; 5-phospho-alpha-D-ribose 1-diphosphate biosynthesis; 5-phospho-alpha-D-ribose 1-diphosphate from D-ribose 5-phosphate (route II): step 3/3. Catalyzes the phosphorylation of ribose 1,5-bisphosphate to 5-phospho-D-ribosyl alpha-1-diphosphate (PRPP). Accepts ATP but not GTP as a phosphoryl donor, and uses ribose 1,5-bisphosphate but not ribose, ribose 1-phosphate, or ribose 5-phosphate as a phosphoryl acceptor. In Escherichia coli (strain K12), this protein is Ribose 1,5-bisphosphate phosphokinase PhnN (phnN).